The sequence spans 338 residues: Ribosomal RNA small subunit methyltransferase H (338 aa).

Residues 53-55, Asp-72, Tyr-99, Asp-123, and Gln-130 contribute to the S-adenosyl-L-methionine site; that span reads GGH. Disordered regions lie at residues 276-297 and 304-323; these read EITP…PGMG and TRGA…RSAP.

Belongs to the methyltransferase superfamily. RsmH family.

It localises to the cytoplasm. The enzyme catalyses cytidine(1402) in 16S rRNA + S-adenosyl-L-methionine = N(4)-methylcytidine(1402) in 16S rRNA + S-adenosyl-L-homocysteine + H(+). Its function is as follows. Specifically methylates the N4 position of cytidine in position 1402 (C1402) of 16S rRNA. The sequence is that of Ribosomal RNA small subunit methyltransferase H from Rhodococcus jostii (strain RHA1).